Reading from the N-terminus, the 932-residue chain is ER degradation-enhancing alpha-mannosidase-like protein 3 (932 aa).

The signal sequence occupies residues 1 to 41; it reads MSEAGGRGCGSPVPQRARWRLVAATAAFCLVSATSVWTAGA. N-linked (GlcNAc...) asparagine glycosylation occurs at N118. E146 acts as the Proton donor in catalysis. The N-linked (GlcNAc...) asparagine glycan is linked to N195. Residue D293 is part of the active site. The active-site Proton donor is the E387. E405 is an active-site residue. Ca(2+) is bound at residue T491. Residues N504 and N511 are each glycosylated (N-linked (GlcNAc...) asparagine). Residues 674 to 779 enclose the PA domain; the sequence is LSKHKETRGF…KEGSIILDAI (106 aa). The segment covering 790–799 has biased composition (basic and acidic residues); the sequence is SDKAKDRDPE. A disordered region spans residues 790 to 908; sequence SDKAKDRDPE…PNVSWGKKVQ (119 aa). N-linked (GlcNAc...) asparagine glycans are attached at residues N810 and N814. Over residues 812 to 825 the composition is skewed to low complexity; the sequence is SQNQSGEQISSSSQ. Polar residues predominate over residues 856-890; it reads ASISPSEQTSNPTENHETTNLNGECTDLDNQLQEQ. A glycan (N-linked (GlcNAc...) asparagine) is linked at N900. The Prevents secretion from ER motif lies at 929–932; sequence KDEL.

The protein belongs to the glycosyl hydrolase 47 family. It depends on Ca(2+) as a cofactor.

The protein localises to the endoplasmic reticulum lumen. It carries out the reaction N(4)-(alpha-D-Man-(1-&gt;2)-alpha-D-Man-(1-&gt;2)-alpha-D-Man-(1-&gt;3)-[alpha-D-Man-(1-&gt;2)-alpha-D-Man-(1-&gt;3)-[alpha-D-Man-(1-&gt;2)-alpha-D-Man-(1-&gt;6)]-alpha-D-Man-(1-&gt;6)]-beta-D-Man-(1-&gt;4)-beta-D-GlcNAc-(1-&gt;4)-beta-D-GlcNAc)-L-asparaginyl-[protein] (N-glucan mannose isomer 9A1,2,3B1,2,3) + 4 H2O = N(4)-(alpha-D-Man-(1-&gt;3)-[alpha-D-Man-(1-&gt;3)-[alpha-D-Man-(1-&gt;6)]-alpha-D-Man-(1-&gt;6)]-beta-D-Man-(1-&gt;4)-beta-D-GlcNAc-(1-&gt;4)-beta-D-GlcNAc)-L-asparaginyl-[protein] (N-glucan mannose isomer 5A1,2) + 4 beta-D-mannose. It catalyses the reaction N(4)-(alpha-D-Man-(1-&gt;2)-alpha-D-Man-(1-&gt;2)-alpha-D-Man-(1-&gt;3)-[alpha-D-Man-(1-&gt;3)-[alpha-D-Man-(1-&gt;2)-alpha-D-Man-(1-&gt;6)]-alpha-D-Man-(1-&gt;6)]-beta-D-Man-(1-&gt;4)-beta-D-GlcNAc-(1-&gt;4)-beta-D-GlcNAc)-L-asparaginyl-[protein] (N-glucan mannose isomer 8A1,2,3B1,3) + 3 H2O = N(4)-(alpha-D-Man-(1-&gt;3)-[alpha-D-Man-(1-&gt;3)-[alpha-D-Man-(1-&gt;6)]-alpha-D-Man-(1-&gt;6)]-beta-D-Man-(1-&gt;4)-beta-D-GlcNAc-(1-&gt;4)-beta-D-GlcNAc)-L-asparaginyl-[protein] (N-glucan mannose isomer 5A1,2) + 3 beta-D-mannose. It functions in the pathway protein modification; protein glycosylation. Functionally, involved in endoplasmic reticulum-associated degradation (ERAD). Accelerates the glycoprotein ERAD by proteasomes, by catalyzing mannose trimming from Man8GlcNAc2 to Man7GlcNAc2 in the N-glycans. May also participate in mannose trimming from all glycoproteins and not just misfolded ones targeted to ERAD. May have alpha 1,2-mannosidase activity. This is ER degradation-enhancing alpha-mannosidase-like protein 3 (EDEM3) from Homo sapiens (Human).